The primary structure comprises 412 residues: Solute carrier family 22 member 18 (412 aa).

Helical transmembrane passes span 16 to 36 (GIII…FMQF), 51 to 71 (VSFG…GPVF), 117 to 137 (LPAA…DLTA), 148 to 168 (LGLC…TLST), 176 to 196 (AFLA…CIPV), 232 to 252 (FLVK…FSII), 264 to 284 (AGYL…LVIG), 294 to 314 (ALLR…ALMS), 316 to 336 (VFHF…LNIV), and 380 to 400 (GVSI…LVLW).

The protein belongs to the major facilitator (TC 2.A.1) superfamily. Organic cation transporter (TC 2.A.1.19) family.

The protein localises to the apical cell membrane. May act as a transporter of organic cations based on a proton efflux antiport mechanism. May play a role in the transport of chloroquine and quinidine-related compounds in kidney. Plays a role in the regulation of lipid metabolism. The sequence is that of Solute carrier family 22 member 18 (Slc67a1) from Rattus norvegicus (Rat).